The chain runs to 309 residues: MDRPQWPGGLIAQVHGFVFSWWGVILLLAIINLKSFPGIWTIRALYHMKSSFNGQLRQTVASPTAENAQRRVPKTPKTGATDTIDHHPLFQPEIISSHVSPAEIDFNMHKSNSTYFTDLDISRIKLVGRIMAPAWPLDRMHVEYKGRDGEMKRERVKGRPALALGATCTSFKREMKVLARYDVESRILGWDSRWLYIGSWFVSRKGGKGKEQLFASSLSKYIVKKGRITVRPEQFLTESGWIPPRPESTGNSKSLDSLQANGHGATENGKHDAKDTWTWEEIESHRLKGMTTVGGWADADLRLEQAYSS.

The chain crosses the membrane as a helical span at residues 11–31 (IAQVHGFVFSWWGVILLLAII). Residues 61–83 (ASPTAENAQRRVPKTPKTGATDT) are disordered. Asn-112 is a glycosylation site (N-linked (GlcNAc...) asparagine). The interval 239–275 (SGWIPPRPESTGNSKSLDSLQANGHGATENGKHDAKD) is disordered. The segment covering 248–260 (STGNSKSLDSLQA) has biased composition (polar residues).

The protein belongs to the lcsJ thioesterase family.

Its subcellular location is the membrane. It functions in the pathway secondary metabolite biosynthesis. Thioesterase; part of the gene cluster that mediates the biosynthesis of the lipopeptide antibiotics leucinostatins that show extensive biological activities, including antimalarial, antiviral, antibacterial, antifungal, and antitumor activities, as well as phytotoxic. Leucinostatin A contains nine amino acid residues, including the unusual amino acid 4-methyl-L-proline (MePro), 2-amino-6-hydroxy-4-methyl-8-oxodecanoic acid (AHyMeOA), 3-hydroxyleucine (HyLeu), alpha-aminoisobutyric acid (AIB), beta-Ala, a 4-methylhex-2-enoic acid at the N-terminus as well as a N1,N1-dimethylpropane-1,2-diamine (DPD) at the C-terminus. The biosynthesis of leucinostatins is probably initiated with the assembly of 4-methylhex-2-enoic acid by a reducing PKS. Two reducing polyketide synthases, lcsB and lcsC, have been identified in the cluster and it is not clear which is the one that assembles 4-methylhex-2-enoic acid since both contain KS, AT, DH, cMT, ER, KR and ACP domains. The polyketide residue might be transferred to the NRPS lcsA, mediated by two additional enzymes, the acyl-CoA ligase lcsD and the thioesterase lcsE. The linear polyketide carboxylic acid, which is released from PKS, is converted to a CoA thioester by lcsD, and then lcsE hydrolyzes the thiol bond and shuttles the polyketide intermediate to lcsA. The C domain of the first module catalyzed the condensation of 4-methylhex-2-enoic acid and MePro carried by domain A1, followed by successive condensations of nine amino acids to trigger the elongation of the linear peptide. A5 and A6 domains of lcsA are proposed to incorporate leucine, A2 AHyMeOA, and A3 incorporates HyLeu. A4, A7 and A8 incorporate AIB. The AHyMeOA in leucinostatin A activated by the A2 might be produced by the second PKS (lcsB or lcsC) present within the cluster. The MePro is probably produced via leucine cyclization and may originate from a separate pathway, independent of the cluster. Another nonproteinogenic amino acid, beta-Ala, could be produced by an aspartic acid decarboxylase also localized outside of the cluster. Two candidates are VFPBJ_01400 and VFPBJ_10476. The final peptide scaffold may be released by the NAD(P)H-dependent thioester reductase (TE) at the C-terminal region of lcsA. Transamination of the lcsA product by the transaminase lcsP may produce DPD at the C-terminus. Further hydroxylation steps performed alternatively by the cytochrome P450 monooxygenases lcsI, lcsK and lcsN then yield the non-methylated leucinostatins precursor. It is also possible that leucines can be hydroxylated prior to their incorporation into the peptide. Varying extents of methylation then lead to the formation of leucinostatins A and B. This is Thioesterase lcsJ from Purpureocillium lilacinum (Paecilomyces lilacinus).